The following is a 539-amino-acid chain: Acid-sensing ion channel 4 (539 aa).

Residues 1-68 (MPIEIVCKIK…GPGPHGLRRT (68 aa)) lie on the Cytoplasmic side of the membrane. The helical transmembrane segment at 69–89 (LWALALLTSLAAFLYQAASLA) threads the bilayer. Over 90–438 (RGYLTRPHLV…EQQAAYGLSA (349 aa)) the chain is Extracellular. Intrachain disulfides connect cysteine 118/cysteine 202 and cysteine 180/cysteine 187. Residues asparagine 191, asparagine 243, asparagine 341, and asparagine 376 are each glycosylated (N-linked (GlcNAc...) asparagine). Intrachain disulfides connect cysteine 296–cysteine 375, cysteine 318–cysteine 371, cysteine 322–cysteine 369, cysteine 331–cysteine 353, and cysteine 333–cysteine 345. Residues 439-459 (LLGDLGGQMGLFIGASILTLL) form a helical membrane-spanning segment. The GAS motif; ion selectivity filter motif lies at 452 to 454 (GAS). Over 460-539 (EILDYIYEVS…PGSLFEDFAC (80 aa)) the chain is Cytoplasmic. Residues 500 to 531 (KEQSPCPSRGRAEGGGASSLLPNHHHPHGPPG) form a disordered region.

It belongs to the amiloride-sensitive sodium channel (TC 1.A.6) family. ASIC4 subfamily. Homotrimer. Heterotrimer; with other ASIC proteins producing functional channels.

The protein resides in the cell membrane. Functionally, does not exhibit measurable stand-alone pH-gated sodium channel activity but may form pH-gated heterotrimeric sodium channels. Its activity could also depend on alternative gating mechanisms. The protein is Acid-sensing ion channel 4 of Mus musculus (Mouse).